We begin with the raw amino-acid sequence, 378 residues long: Ribosomal RNA large subunit methyltransferase G (378 aa).

The protein belongs to the methyltransferase superfamily. RlmG family.

The protein localises to the cytoplasm. It carries out the reaction guanosine(1835) in 23S rRNA + S-adenosyl-L-methionine = N(2)-methylguanosine(1835) in 23S rRNA + S-adenosyl-L-homocysteine + H(+). Functionally, specifically methylates the guanine in position 1835 (m2G1835) of 23S rRNA. The protein is Ribosomal RNA large subunit methyltransferase G of Escherichia coli O1:K1 / APEC.